We begin with the raw amino-acid sequence, 282 residues long: F-actin-capping protein subunit beta (282 aa).

Residues 73-103 (SPWSNQFDPPLDEAGSGGVGAGGNEGAGEGA) form a disordered region. The segment covering 87-101 (GSGGVGAGGNEGAGE) has biased composition (gly residues).

The protein belongs to the F-actin-capping protein beta subunit family. In terms of assembly, component of the F-actin capping complex, composed of a heterodimer of an alpha and a beta subunit.

It localises to the cytoplasm. It is found in the cytoskeleton. The protein localises to the actin patch. Its function is as follows. F-actin-capping proteins bind in a Ca(2+)-independent manner to the fast growing ends of actin filaments (barbed end) thereby blocking the exchange of subunits at these ends. Unlike other capping proteins (such as gelsolin and severin), these proteins do not sever actin filaments. The protein is F-actin-capping protein subunit beta (CAP2) of Gibberella zeae (strain ATCC MYA-4620 / CBS 123657 / FGSC 9075 / NRRL 31084 / PH-1) (Wheat head blight fungus).